The chain runs to 201 residues: Holliday junction resolvase RecU (201 aa).

The Mg(2+) site is built by T87, D89, E102, and Q121.

This sequence belongs to the RecU family. The cofactor is Mg(2+).

It is found in the cytoplasm. It carries out the reaction Endonucleolytic cleavage at a junction such as a reciprocal single-stranded crossover between two homologous DNA duplexes (Holliday junction).. Endonuclease that resolves Holliday junction intermediates in genetic recombination. Cleaves mobile four-strand junctions by introducing symmetrical nicks in paired strands. Promotes annealing of linear ssDNA with homologous dsDNA. Required for DNA repair, homologous recombination and chromosome segregation. In Listeria monocytogenes serotype 4b (strain F2365), this protein is Holliday junction resolvase RecU.